A 591-amino-acid polypeptide reads, in one-letter code: Transcription factor COE1-A (591 aa).

Residues 63–66 (RKSN) form an interaction with DNA region. The C5-type zinc finger occupies 151 to 170 (CRVLLTHEIMCSRCCDKKSC). 2 interaction with DNA regions span residues 197–204 (NCLKNAGN) and 236–239 (NNSK). An IPT/TIG domain is found at 262–344 (PCIKAISPSE…CKGTPGRFIY (83 aa)). Residues 454-466 (ANQGFSRNTSSVS) are compositionally biased toward polar residues. Positions 454–484 (ANQGFSRNTSSVSPHGYVPSTTPQQSSYSTV) are disordered. The span at 471–484 (VPSTTPQQSSYSTV) shows a compositional bias: low complexity.

The protein belongs to the COE family. Forms either a homodimer or a heterodimer with a related family member. As to expression, detected in B cells.

Its subcellular location is the nucleus. Its function is as follows. Transcriptional activator. In Danio rerio (Zebrafish), this protein is Transcription factor COE1-A.